A 280-amino-acid polypeptide reads, in one-letter code: ATP synthase gamma chain (280 aa).

Belongs to the ATPase gamma chain family. F-type ATPases have 2 components, CF(1) - the catalytic core - and CF(0) - the membrane proton channel. CF(1) has five subunits: alpha(3), beta(3), gamma(1), delta(1), epsilon(1). CF(0) has three main subunits: a, b and c.

Its subcellular location is the cell membrane. Its function is as follows. Produces ATP from ADP in the presence of a proton gradient across the membrane. The gamma chain is believed to be important in regulating ATPase activity and the flow of protons through the CF(0) complex. This Mycoplasma capricolum subsp. capricolum (strain California kid / ATCC 27343 / NCTC 10154) protein is ATP synthase gamma chain.